We begin with the raw amino-acid sequence, 342 residues long: Inositol 2-dehydrogenase 2 (342 aa).

The protein belongs to the Gfo/Idh/MocA family. Homotetramer.

It carries out the reaction myo-inositol + NAD(+) = scyllo-inosose + NADH + H(+). Its function is as follows. Involved in the oxidation of myo-inositol (MI) to 2-keto-myo-inositol (2KMI or 2-inosose). This is Inositol 2-dehydrogenase 2 from Mycolicibacterium vanbaalenii (strain DSM 7251 / JCM 13017 / BCRC 16820 / KCTC 9966 / NRRL B-24157 / PYR-1) (Mycobacterium vanbaalenii).